The primary structure comprises 263 residues: Probable ABC transporter permease protein slr1045 (263 aa).

7 helical membrane passes run 12–32 (LWFQRLVAAFFLTGQVFLHIL), 52–72 (SMAIALITAGFVGMVFTIQVA), 97–117 (APVLTAVVIAGRVGSAFAAEI), 140–162 (LVVPRVIACGLMLPILTGLSLFV), 167–186 (GLVISSSLYAINPTIFLNSV), 192–212 (LWDVFACLFKSLVFGVIIAII), and 234–254 (AVVTSLLAIFISNFFLSWLMF).

It belongs to the MlaE permease family.

It localises to the cell membrane. Functionally, could be part of an ABC transporter complex. In Synechocystis sp. (strain ATCC 27184 / PCC 6803 / Kazusa), this protein is Probable ABC transporter permease protein slr1045.